Reading from the N-terminus, the 239-residue chain is Immunoglobulin superfamily member 23 (239 aa).

The interval 63-93 is disordered; the sequence is ELEAQPPTSSSPKGLPGRPRTSQEVPNAEDN. In terms of domain architecture, Ig-like spans 94-179; that stretch reads PSLIPLVTFP…ELVSEPVTVS (86 aa). The helical transmembrane segment at 214–234 threads the bilayer; the sequence is LIVAATIGGLVLIGSVCFYIL.

The protein localises to the cell membrane. May be involved in osteoclast differentiation. This chain is Immunoglobulin superfamily member 23, found in Mus musculus (Mouse).